Consider the following 379-residue polypeptide: Glutamate 5-kinase (379 aa).

Lys-19 contributes to the ATP binding site. Substrate-binding residues include Ser-59, Asp-146, and Asn-158. ATP-binding positions include 178–179 (TD) and 220–226 (TGGMATK). In terms of domain architecture, PUA spans 285–363 (SGDIVIDQGA…KDIISILGYD (79 aa)).

Belongs to the glutamate 5-kinase family.

It is found in the cytoplasm. It carries out the reaction L-glutamate + ATP = L-glutamyl 5-phosphate + ADP. It participates in amino-acid biosynthesis; L-proline biosynthesis; L-glutamate 5-semialdehyde from L-glutamate: step 1/2. Catalyzes the transfer of a phosphate group to glutamate to form L-glutamate 5-phosphate. This Vibrio vulnificus (strain YJ016) protein is Glutamate 5-kinase.